The following is a 1385-amino-acid chain: DNA-directed RNA polymerase subunit beta' (1385 aa).

Positions 75, 77, 90, and 93 each coordinate Zn(2+). Positions 466, 468, and 470 each coordinate Mg(2+). Positions 809, 883, 890, and 893 each coordinate Zn(2+).

This sequence belongs to the RNA polymerase beta' chain family. As to quaternary structure, the RNAP catalytic core consists of 2 alpha, 1 beta, 1 beta' and 1 omega subunit. When a sigma factor is associated with the core the holoenzyme is formed, which can initiate transcription. Mg(2+) is required as a cofactor. Requires Zn(2+) as cofactor.

The catalysed reaction is RNA(n) + a ribonucleoside 5'-triphosphate = RNA(n+1) + diphosphate. Its function is as follows. DNA-dependent RNA polymerase catalyzes the transcription of DNA into RNA using the four ribonucleoside triphosphates as substrates. The protein is DNA-directed RNA polymerase subunit beta' of Nitratidesulfovibrio vulgaris (strain ATCC 29579 / DSM 644 / CCUG 34227 / NCIMB 8303 / VKM B-1760 / Hildenborough) (Desulfovibrio vulgaris).